Consider the following 95-residue polypeptide: Glutamyl-tRNA(Gln) amidotransferase subunit C (95 aa).

The protein belongs to the GatC family. Heterotrimer of A, B and C subunits.

It carries out the reaction L-glutamyl-tRNA(Gln) + L-glutamine + ATP + H2O = L-glutaminyl-tRNA(Gln) + L-glutamate + ADP + phosphate + H(+). It catalyses the reaction L-aspartyl-tRNA(Asn) + L-glutamine + ATP + H2O = L-asparaginyl-tRNA(Asn) + L-glutamate + ADP + phosphate + 2 H(+). Allows the formation of correctly charged Asn-tRNA(Asn) or Gln-tRNA(Gln) through the transamidation of misacylated Asp-tRNA(Asn) or Glu-tRNA(Gln) in organisms which lack either or both of asparaginyl-tRNA or glutaminyl-tRNA synthetases. The reaction takes place in the presence of glutamine and ATP through an activated phospho-Asp-tRNA(Asn) or phospho-Glu-tRNA(Gln). The sequence is that of Glutamyl-tRNA(Gln) amidotransferase subunit C from Mesorhizobium japonicum (strain LMG 29417 / CECT 9101 / MAFF 303099) (Mesorhizobium loti (strain MAFF 303099)).